We begin with the raw amino-acid sequence, 469 residues long: 3-isopropylmalate dehydratase large subunit (469 aa).

[4Fe-4S] cluster is bound by residues cysteine 350, cysteine 410, and cysteine 413.

It belongs to the aconitase/IPM isomerase family. LeuC type 1 subfamily. As to quaternary structure, heterodimer of LeuC and LeuD. Requires [4Fe-4S] cluster as cofactor.

It carries out the reaction (2R,3S)-3-isopropylmalate = (2S)-2-isopropylmalate. Its pathway is amino-acid biosynthesis; L-leucine biosynthesis; L-leucine from 3-methyl-2-oxobutanoate: step 2/4. Its function is as follows. Catalyzes the isomerization between 2-isopropylmalate and 3-isopropylmalate, via the formation of 2-isopropylmaleate. This is 3-isopropylmalate dehydratase large subunit from Brucella melitensis biotype 2 (strain ATCC 23457).